A 610-amino-acid polypeptide reads, in one-letter code: MTATASHTRARPLGASEIEHATRIAEPDFDLLDALYRTDDPDDQARLLARVVLSAFDNYYAVSRRIPALAQAAFEARDWPVTVRLSKIRIGLYTACIDQLVPLLKAGLPELTTDEQLWPTAEAELLAAIEGRYEADFAFAFWQSLRRKLVSDEWRPVSYDAGSTARRTTSPAAVLKTTTTTLPITAEVIAGILGDAGFRVPWRDRDGDAALAAQAIETALEPLSPRPGEPVKIEIADAGFFRNRGACLVGRIQLRDRGDMPMRNLPLLIALLNEKDGLVVDAVLTDSDELQYAFSSTLANYHATNPRYHELARLLYELMPKRPLGTQYSCIGFHHLGKVAVMSEILAEHRKTKERLATAPGFKGTVAIAFTMPSSAYVLKIIRDHPTDDYKFDYFDGLDEVLRKYNLVHEIDRAGSMLDNIIYSNVKLDRAMFAPELLDELLEAGIGTVTLDRGALVFRHLIVQIKLTPLPLYLANASAAESRAAVINLGDCIKNNAAADIFNKDLDGRNYGVSRIRKVYLFDYDAVEPLTSVTVSRDGAAPGEFDNGMVFRPQEMLEGLRIDDPGLRRAFRDAHPELMQADYWEGMQRALRDGKVPKVMNYPASRRLQR.

ATP contacts are provided by residues alanine 359–threonine 365 and lysine 380. The active site involves aspartate 419.

Belongs to the AceK family.

It is found in the cytoplasm. It carries out the reaction L-seryl-[isocitrate dehydrogenase] + ATP = O-phospho-L-seryl-[isocitrate dehydrogenase] + ADP + H(+). Bifunctional enzyme which can phosphorylate or dephosphorylate isocitrate dehydrogenase (IDH) on a specific serine residue. This is a regulatory mechanism which enables bacteria to bypass the Krebs cycle via the glyoxylate shunt in response to the source of carbon. When bacteria are grown on glucose, IDH is fully active and unphosphorylated, but when grown on acetate or ethanol, the activity of IDH declines drastically concomitant with its phosphorylation. The chain is Isocitrate dehydrogenase kinase/phosphatase from Rhodopseudomonas palustris (strain TIE-1).